Here is a 476-residue protein sequence, read N- to C-terminus: Efflux pump atB (476 aa).

Residues 1–38 (MAPQLAGSSHSSSASDQAHRQSSDPALESGSDTHVGSI) form a disordered region. A run of 10 helical transmembrane segments spans residues 69 to 89 (LIVAIVSSTRLGLSPMILAPL), 96 to 116 (KPVYVVSMFFFVVWIIPCAVA), 127 to 147 (FFNGFAGAAFLSVAGGTVGDL), 186 to 206 (WSFYILLIWAFAQWVSISLLV), 264 to 284 (LLLCLFCSVLLGVLYLFFGAF), 294 to 314 (FNLWQVGLSFLGITVGMIIGI), 347 to 367 (LPPAVGGAPLVTIGLLWFAWT), 372 to 392 (VHWIVPIIGSGIFGAGVIMIF), 403 to 425 (YPLYAASALAANSFSRSMFAAAF), and 440 to 460 (WAGFLLAMITLLLAPFPYIFY).

It belongs to the major facilitator superfamily.

It is found in the cell membrane. Its function is as follows. Efflux pump that might be required for efficient secretion of terreic acid. This chain is Efflux pump atB, found in Aspergillus terreus (strain NIH 2624 / FGSC A1156).